The following is a 589-amino-acid chain: Capsid scaffolding protein (589 aa).

Catalysis depends on charge relay system residues His47, Ser118, and His142. The segment covering 264-273 (EKERPKEPEQ) has biased composition (basic and acidic residues). The segment at 264-283 (EKERPKEPEQSHVPTESMSH) is disordered. The tract at residues 307–326 (HDGVYLPKDAFFSLIGASRP) is interaction with pAP. Disordered regions lie at residues 421 to 478 (RSRS…GDRY) and 514 to 552 (ASPT…AERG). 2 consecutive short sequence motifs (nuclear localization signal) follow at residues 428-433 (KRRRER) and 453-459 (KARKRLK). Basic residues predominate over residues 453–462 (KARKRLKAHH). Positions 514-543 (ASPTTTTSHQAEASEPQASTAAAAPSTASS) are enriched in low complexity. The interval 569-589 (PPKDMVDLNRRLFVAALNKME) is interaction with major capsid protein.

Belongs to the herpesviridae capsid scaffolding protein family. Homomultimer. Interacts with major capsid protein. As to quaternary structure, exists in a monomer-dimer equilibrium with the dimer being the active species. In terms of processing, capsid scaffolding protein is cleaved by assemblin after formation of the spherical procapsid. As a result, the capsid obtains its mature, icosahedral shape. Cleavages occur at two or more sites: release (R-site) and maturation (M-site).

It localises to the host cytoplasm. The protein resides in the host nucleus. It carries out the reaction Cleaves -Ala-|-Ser- and -Ala-|-Ala- bonds in the scaffold protein.. Its function is as follows. Acts as a scaffold protein by binding major capsid protein in the cytoplasm, inducing the nuclear localization of both proteins. Multimerizes in the nucleus such as major capsid protein forms the icosahedral T=16 capsid. Autocatalytic cleavage releases the assembly protein, and subsequently abolishes interaction with major capsid protein. Cleavages products are evicted from the capsid before or during DNA packaging. Functionally, protease that plays an essential role in virion assembly within the nucleus. Catalyzes the cleavage of the assembly protein after formation of the spherical procapsid. By that cleavage, the capsid matures and gains its icosahedral shape. The cleavage sites seem to include -Ala-Ser-, -Ala-Ala-, as well as Ala-Thr bonds. Assemblin and cleavages products are evicted from the capsid before or during DNA packaging. In terms of biological role, plays a major role in capsid assembly. Acts as a scaffold protein by binding major capsid protein. Multimerizes in the nucleus such as major capsid protein forms the icosahedral T=16 capsid. Cleaved by assemblin after capsid completion. The cleavages products are evicted from the capsid before or during DNA packaging. The chain is Capsid scaffolding protein (UL80) from Simian cytomegalovirus (strain Colburn).